The chain runs to 878 residues: Protein translocase subunit SecA (878 aa).

ATP-binding positions include Gln-79, Gly-97 to Thr-101, and Asp-487.

The protein belongs to the SecA family.

It is found in the plastid. It localises to the chloroplast stroma. The protein localises to the chloroplast thylakoid membrane. It catalyses the reaction ATP + H2O + cellular proteinSide 1 = ADP + phosphate + cellular proteinSide 2.. Functionally, has a central role in coupling the hydrolysis of ATP to the transfer of proteins across the thylakoid membrane. This is Protein translocase subunit SecA from Antithamnion sp. (Red alga).